We begin with the raw amino-acid sequence, 208 residues long: Mediator of RNA polymerase II transcription subunit 18 (208 aa).

This sequence belongs to the Mediator complex subunit 18 family. In terms of assembly, component of the Mediator complex.

It localises to the nucleus. Component of the Mediator complex, a coactivator involved in the regulated transcription of nearly all RNA polymerase II-dependent genes. Mediator functions as a bridge to convey information from gene-specific regulatory proteins to the basal RNA polymerase II transcription machinery. Mediator is recruited to promoters by direct interactions with regulatory proteins and serves as a scaffold for the assembly of a functional preinitiation complex with RNA polymerase II and the general transcription factors. The polypeptide is Mediator of RNA polymerase II transcription subunit 18 (med18) (Xenopus laevis (African clawed frog)).